The chain runs to 544 residues: Cytochrome P450 monooxygenase verL (544 aa).

The chain crosses the membrane as a helical span at residues 3–23 (VALFPILPIGCLLIYIIFKLW). Cysteine 446 is a heme binding site. The interval 520–544 (QEKGIDGWKGKKESSSEENRGVSSR) is disordered.

This sequence belongs to the cytochrome P450 family. Heme serves as cofactor.

It is found in the membrane. Its pathway is mycotoxin biosynthesis. Its function is as follows. Cytochrome P450 monooxygenase; part of the gene cluster that mediates the biosynthesis of 11'-deoxyverticillin A, one of the dimeric epipolythiodioxopiperazines (ETPs) from the verticillin family that act as mycotoxins. 11'-deoxyverticillin A is required for normal conidiation. The nonribosomal peptide synthetase verP is speculated to be responsible for condensation of amino acids to form the carbon skeleton of verticillin, whereas the cluster-specific tailoring enzymes are involved in further modifications leading to the production of 11'-deoxyverticillin A. This chain is Cytochrome P450 monooxygenase verL, found in Clonostachys rogersoniana.